The primary structure comprises 465 residues: Midnolin (465 aa).

In terms of domain architecture, Ubiquitin-like spans 32-106 (MSLAIHSTTG…LTLVPTVEAG (75 aa)). 2 disordered regions span residues 185–262 (SVAT…SRKP) and 400–445 (RLRR…GLDF). Low complexity-rich tracts occupy residues 195–219 (RPVSSAARVPPVSSSPSSPVSPSPV) and 240–257 (SPPASSSSTSTPGSSPTP). The tract at residues 397–424 (QQKRLRRKARRDARGPYHWTPSRKAGRS) is required for nucleolar localization.

Interacts with GCK; the interaction occurs preferentially at low glucose levels. Interacts with the proteasome. Expressed at high levels in brain and liver with significantly lower levels in muscle.

Its subcellular location is the nucleus. The protein localises to the cytoplasm. The protein resides in the cytosol. It localises to the nucleolus. Its function is as follows. Facilitates the ubiquitin-independent proteasomal degradation of stimulus-induced transcription factors such as FOSB, EGR1, NR4A1, and IRF4 to the proteasome for degradation. Promotes also the degradation of other substrates such as CBX4. Plays a role in inhibiting the activity of glucokinase GCK and both glucose-induced and basal insulin secretion. This is Midnolin (Midn) from Mus musculus (Mouse).